Consider the following 435-residue polypeptide: Methionine aminopeptidase 2 (435 aa).

Residues 1–87 are disordered; it reads MAAQVADGVA…TQTKPPRVPV (87 aa). Basic and acidic residues predominate over residues 10–19; the sequence is ADLKLDDTKS. A compositionally biased stretch (polar residues) spans 20–29; it reads KPTNGTTQNG. The span at 32–46 shows a compositional bias: acidic residues; it reads EHEDSDDDNEGEEGA. Over residues 55 to 68 the composition is skewed to basic residues; that stretch reads KKKKKRKPRKKKKA. H199 provides a ligand contact to substrate. The a divalent metal cation site is built by D219, D230, and H299. H307 provides a ligand contact to substrate. Residues E332 and E427 each coordinate a divalent metal cation.

Belongs to the peptidase M24A family. Methionine aminopeptidase eukaryotic type 2 subfamily. Requires Co(2+) as cofactor. It depends on Zn(2+) as a cofactor. The cofactor is Mn(2+). Fe(2+) serves as cofactor.

The protein localises to the cytoplasm. It catalyses the reaction Release of N-terminal amino acids, preferentially methionine, from peptides and arylamides.. Cotranslationally removes the N-terminal methionine from nascent proteins. The N-terminal methionine is often cleaved when the second residue in the primary sequence is small and uncharged (Met-Ala-, Cys, Gly, Pro, Ser, Thr, or Val). This chain is Methionine aminopeptidase 2, found in Phaeosphaeria nodorum (strain SN15 / ATCC MYA-4574 / FGSC 10173) (Glume blotch fungus).